Reading from the N-terminus, the 329-residue chain is Mitochondrial substrate carrier family protein Q (329 aa).

Solcar repeat units lie at residues 18 to 115 (VEAL…LKSI), 125 to 206 (LGTI…LRAL), and 216 to 310 (LGGL…VVIH). 6 consecutive transmembrane segments (helical) span residues 21-41 (LGHAISGGVAGMAAIALTYPF), 95-115 (LIGIGASSFVYYYWYTLLKSI), 131-151 (LAIAALAGCANVLTTLPIWVV), 175-195 (GFGGLYKGLIPALILVSNPSV), 221-241 (VFILGAIAKLIAGIVTYPYLL), and 298-318 (AFMFLVKDKVVIHAVAILFYL).

Belongs to the mitochondrial carrier (TC 2.A.29) family.

The protein resides in the peroxisome membrane. In terms of biological role, may have transport activity. The protein is Mitochondrial substrate carrier family protein Q (mcfQ) of Dictyostelium discoideum (Social amoeba).